Here is a 142-residue protein sequence, read N- to C-terminus: ATP synthase epsilon chain (142 aa).

This sequence belongs to the ATPase epsilon chain family. In terms of assembly, F-type ATPases have 2 components, CF(1) - the catalytic core - and CF(0) - the membrane proton channel. CF(1) has five subunits: alpha(3), beta(3), gamma(1), delta(1), epsilon(1). CF(0) has three main subunits: a, b and c.

Its subcellular location is the cell inner membrane. Produces ATP from ADP in the presence of a proton gradient across the membrane. The chain is ATP synthase epsilon chain from Maridesulfovibrio salexigens (strain ATCC 14822 / DSM 2638 / NCIMB 8403 / VKM B-1763) (Desulfovibrio salexigens).